The chain runs to 173 residues: DASH complex subunit SPC19 (173 aa).

This sequence belongs to the DASH complex SPC19 family. Component of the DASH complex consisting of ASK1, DAD1, DAD2, DAD3, DAD4, DAM1, DUO1, HSK3, SPC19 and SPC34, with a stoichiometry of one copy of each subunit per complex. Multiple DASH complexes oligomerize to form a ring that encircles spindle microtubules and organizes the rod-like NDC80 complexes of the outer kinetochore. DASH complex oligomerization strengthens microtubule attachments. On cytoplasmic microtubules, DASH complexes appear to form patches instead of rings.

The protein resides in the nucleus. The protein localises to the cytoplasm. Its subcellular location is the cytoskeleton. It localises to the spindle. It is found in the chromosome. The protein resides in the centromere. The protein localises to the kinetochore. Functionally, component of the DASH complex that connects microtubules with kinetochores and couples microtubule depolymerisation to chromosome movement; it is involved in retrieving kinetochores to the spindle poles before their re-orientation on the spindle in early mitosis and allows microtubule depolymerization to pull chromosomes apart and resist detachment during anaphase. Kinetochores, consisting of a centromere-associated inner segment and a microtubule-contacting outer segment, play a crucial role in chromosome segregation by mediating the physical connection between centromeric DNA and microtubules. Kinetochores also serve as an input point for the spindle assembly checkpoint, which delays anaphase until all chromosomes have bioriented on the mitotic spindle. In Chaetomium thermophilum (strain DSM 1495 / CBS 144.50 / IMI 039719) (Thermochaetoides thermophila), this protein is DASH complex subunit SPC19.